Here is a 165-residue protein sequence, read N- to C-terminus: Peptide deformylase (165 aa).

Fe cation is bound by residues cysteine 93 and histidine 135. Glutamate 136 is a catalytic residue. Histidine 139 provides a ligand contact to Fe cation.

This sequence belongs to the polypeptide deformylase family. Fe(2+) is required as a cofactor.

It carries out the reaction N-terminal N-formyl-L-methionyl-[peptide] + H2O = N-terminal L-methionyl-[peptide] + formate. In terms of biological role, removes the formyl group from the N-terminal Met of newly synthesized proteins. Requires at least a dipeptide for an efficient rate of reaction. N-terminal L-methionine is a prerequisite for activity but the enzyme has broad specificity at other positions. This is Peptide deformylase from Thermodesulfovibrio yellowstonii (strain ATCC 51303 / DSM 11347 / YP87).